Reading from the N-terminus, the 418-residue chain is Glutamyl-tRNA reductase (418 aa).

Substrate is bound by residues 49-52 (TCNR), Ser-109, 114-116 (EPQ), and Gln-120. The active-site Nucleophile is the Cys-50. An NADP(+)-binding site is contributed by 189-194 (GAGETI).

Belongs to the glutamyl-tRNA reductase family. In terms of assembly, homodimer.

It catalyses the reaction (S)-4-amino-5-oxopentanoate + tRNA(Glu) + NADP(+) = L-glutamyl-tRNA(Glu) + NADPH + H(+). It functions in the pathway porphyrin-containing compound metabolism; protoporphyrin-IX biosynthesis; 5-aminolevulinate from L-glutamyl-tRNA(Glu): step 1/2. Its function is as follows. Catalyzes the NADPH-dependent reduction of glutamyl-tRNA(Glu) to glutamate 1-semialdehyde (GSA). This Escherichia fergusonii (strain ATCC 35469 / DSM 13698 / CCUG 18766 / IAM 14443 / JCM 21226 / LMG 7866 / NBRC 102419 / NCTC 12128 / CDC 0568-73) protein is Glutamyl-tRNA reductase.